A 293-amino-acid chain; its full sequence is SAGA-associated factor 29 (293 aa).

Positions 3–88 (LVSADSRIAE…KALDKIAEIK (86 aa)) form a coiled coil. The 142-residue stretch at 152-293 (GDYVAKPGDK…VVACKEPKKK (142 aa)) folds into the SGF29 C-terminal domain. 2 histone H3K4me3 N-terminus binding regions span residues 194 to 196 (DID) and 240 to 243 (QTTC). The histone H3K4me3 binding stretch occupies residues 264–266 (FED). Lys-288 is subject to N6-acetyllysine.

It belongs to the SGF29 family. Interacts with dimethylated and trimethylated 'Lys-4' of histone H3 (H3K4me2 and H3K4me3), with a preference for the trimethylated form (H3K4me3). Component of some SAGA-type complexes. Component of the ADA2A-containing complex (ATAC), composed of KAT14, KAT2A, TADA2L, TADA3L, ZZ3, MBIP, WDR5, YEATS2, CCDC101 and DR1. Interacts with (methylated) CGAS. Interacts with TADA3L, GCN5L2, SUPT3H and MYC. As to expression, widely expressed with highest levels in testis. Highly expressed in hepatoma and other tumor cell lines.

The protein localises to the nucleus. Chromatin reader component of some histone acetyltransferase (HAT) SAGA-type complexes like the TFTC-HAT, ATAC or STAGA complexes. SGF29 specifically recognizes and binds methylated 'Lys-4' of histone H3 (H3K4me), with a preference for trimethylated form (H3K4me3). In the SAGA-type complexes, SGF29 is required to recruit complexes to H3K4me. Involved in the response to endoplasmic reticulum (ER) stress by recruiting the SAGA complex to H3K4me, thereby promoting histone H3 acetylation and cell survival. Also binds non-histone proteins that are methylated on Lys residues: specifically recognizes and binds CGAS monomethylated on 'Lys-491'. May be involved in MYC-mediated oncogenic transformation. The polypeptide is SAGA-associated factor 29 (Rattus norvegicus (Rat)).